Consider the following 494-residue polypeptide: Cytochrome P450 2G1 (494 aa).

Residue cysteine 439 participates in heme binding.

The protein belongs to the cytochrome P450 family. Heme is required as a cofactor. As to expression, olfactory epithelium.

The protein resides in the endoplasmic reticulum membrane. Its subcellular location is the microsome membrane. It carries out the reaction an organic molecule + reduced [NADPH--hemoprotein reductase] + O2 = an alcohol + oxidized [NADPH--hemoprotein reductase] + H2O + H(+). Cytochromes P450 are a group of heme-thiolate monooxygenases. This isozyme seems to be implicated in olfaction. The sequence is that of Cytochrome P450 2G1 (Cyp2g1) from Rattus norvegicus (Rat).